Here is a 47-residue protein sequence, read N- to C-terminus: Variabilin (47 aa).

The Cell attachment site signature appears at R32–D34.

Post-translationally, contains 2 disulfide bonds. In terms of tissue distribution, expressed in salivary glands.

The protein resides in the secreted. Functionally, potently inhibits platelet aggregation induced by ADP (IC(50)=157 nM, complete inhibition at 514 nM). Also inhibits platelet aggregation induced by collagen and by the thrombin receptor peptide SFLLRNP. Is a potent antagonist of the fibrinogen receptor glycoprotein IIb-IIIa (ITGA2B/ITGB3) and the vitronectin receptor alpha-v/beta-3 (ITGAV/ITGB3). The sequence is that of Variabilin from Dermacentor variabilis (American dog tick).